A 550-amino-acid polypeptide reads, in one-letter code: Thermosome subunit (550 aa).

The disordered stretch occupies residues 529 to 550; the sequence is KEKEGEKGGGGSEDFSSSSDLD. Residues 541-550 are compositionally biased toward low complexity; sequence EDFSSSSDLD.

The protein belongs to the TCP-1 chaperonin family. In terms of assembly, forms an oligomeric complex of eight-membered rings.

Functionally, molecular chaperone; binds unfolded polypeptides in vitro, and has a weak ATPase activity. This chain is Thermosome subunit (ths), found in Pyrococcus abyssi (strain GE5 / Orsay).